Consider the following 339-residue polypeptide: Ubiquitin carboxyl-terminal hydrolase 50 (339 aa).

The USP domain maps to 44–339; that stretch reads TGLWNLGNTC…AFCKNSVTQA (296 aa). Residue C53 is the Nucleophile of the active site. H327 serves as the catalytic Proton acceptor.

The protein belongs to the peptidase C19 family. In terms of tissue distribution, weakly expressed in a few tissues.

The protein localises to the cytoplasm. It localises to the cytoskeleton. The protein resides in the microtubule organizing center. It is found in the centrosome. Its subcellular location is the nucleus. The catalysed reaction is Thiol-dependent hydrolysis of ester, thioester, amide, peptide and isopeptide bonds formed by the C-terminal Gly of ubiquitin (a 76-residue protein attached to proteins as an intracellular targeting signal).. Its function is as follows. Deubiquitinating enzyme that removes conjugated ubiquitin from specific proteins to regulate different cellular processes. Regulates the inflammasome signaling pathway by deubiquitinating 'Lys-63'-linked polyubiquitination of the PYCARD/ASC adapter protein. Regulates the ubiquitination and stability of the ACE2 protein. Acts as a negative regulator of the G2/M checkpoint pathway, by preventing serine/threonine kinase WEE1 degradation, thereby repressing entry into mitosis following activation of the G2/M DNA damage checkpoint. The polypeptide is Ubiquitin carboxyl-terminal hydrolase 50 (Homo sapiens (Human)).